Reading from the N-terminus, the 137-residue chain is Histone H2B (137 aa).

The span at 1 to 10 shows a compositional bias: basic and acidic residues; that stretch reads MAPKAADKKP. The interval 1 to 46 is disordered; the sequence is MAPKAADKKPASKAPATASKAPEKKDAGKKTAASGDKKKRSKSRKE. An N6-acetyllysine; alternate mark is found at lysine 8 and lysine 9. Residues lysine 8 and lysine 9 each participate in a glycyl lysine isopeptide (Lys-Gly) (interchain with G-Cter in SUMO); alternate cross-link. Serine 12 bears the Phosphoserine mark. Residue lysine 13 is modified to N6-acetyllysine. Lysine 24 is modified (N6-acetyllysine; alternate). A Glycyl lysine isopeptide (Lys-Gly) (interchain with G-Cter in SUMO); alternate cross-link involves residue lysine 24. Lysine 25 participates in a covalent cross-link: Glycyl lysine isopeptide (Lys-Gly) (interchain with G-Cter in SUMO). Lysine 131 participates in a covalent cross-link: Glycyl lysine isopeptide (Lys-Gly) (interchain with G-Cter in ubiquitin).

It belongs to the histone H2B family. In terms of assembly, the nucleosome is a histone octamer containing two molecules each of H2A, H2B, H3 and H4 assembled in one H3-H4 heterotetramer and two H2A-H2B heterodimers. The octamer wraps approximately 147 bp of DNA. Post-translationally, monoubiquitinated by the UBC2-BRE1 complex to form H2BK123ub1. H2BK123ub1 gives a specific tag for epigenetic transcriptional activation and is also prerequisite for H3K4me and H3K79me formation. H2BK123ub1 also modulates the formation of double-strand breaks during meiosis and is a prerequisite for DNA-damage checkpoint activation. In terms of processing, phosphorylated to form H2BS10ph during progression through meiotic prophase. May be correlated with chromosome condensation. Acetylated by GCN5 to form H2BK11ac and H2BK16ac. H2BK16ac can also be formed by ESA1. Acetylation of N-terminal lysines and particularly formation of H2BK11acK16ac has a positive effect on transcription. Post-translationally, sumoylation to form H2BK6su or H2BK7su, and probably also H2BK16su or H2BK17su, occurs preferentially near the telomeres and represses gene transcription.

Its subcellular location is the nucleus. It is found in the chromosome. Core component of nucleosome. Nucleosomes wrap and compact DNA into chromatin, limiting DNA accessibility to the cellular machineries which require DNA as a template. Histones thereby play a central role in transcription regulation, DNA repair, DNA replication and chromosomal stability. DNA accessibility is regulated via a complex set of post-translational modifications of histones, also called histone code, and nucleosome remodeling. This chain is Histone H2B (HTB1), found in Gibberella zeae (strain ATCC MYA-4620 / CBS 123657 / FGSC 9075 / NRRL 31084 / PH-1) (Wheat head blight fungus).